Consider the following 292-residue polypeptide: Ribosomal RNA small subunit methyltransferase A (292 aa).

Positions 46, 48, 73, 94, 118, and 136 each coordinate S-adenosyl-L-methionine.

This sequence belongs to the class I-like SAM-binding methyltransferase superfamily. rRNA adenine N(6)-methyltransferase family. RsmA subfamily.

It is found in the cytoplasm. It catalyses the reaction adenosine(1518)/adenosine(1519) in 16S rRNA + 4 S-adenosyl-L-methionine = N(6)-dimethyladenosine(1518)/N(6)-dimethyladenosine(1519) in 16S rRNA + 4 S-adenosyl-L-homocysteine + 4 H(+). In terms of biological role, specifically dimethylates two adjacent adenosines (A1518 and A1519) in the loop of a conserved hairpin near the 3'-end of 16S rRNA in the 30S particle. May play a critical role in biogenesis of 30S subunits. This chain is Ribosomal RNA small subunit methyltransferase A, found in Deinococcus radiodurans (strain ATCC 13939 / DSM 20539 / JCM 16871 / CCUG 27074 / LMG 4051 / NBRC 15346 / NCIMB 9279 / VKM B-1422 / R1).